The primary structure comprises 298 residues: Rhodomycin D methylesterase DnrP (298 aa).

Residues 25–277 enclose the AB hydrolase-1 domain; sequence PLLLIAGGNL…VEIENMGHAL (253 aa).

Belongs to the methyl esterase DnrP family.

It carries out the reaction rhodomycin D + H2O = 10-carboxy-13-deoxycarminomycin + methanol + H(+). The catalysed reaction is 4-O-methylrhodomycin D + H2O = 10-carboxy-13-deoxydaunorubicin + methanol + H(+). Its pathway is antibiotic biosynthesis; daunorubicin biosynthesis. It participates in antibiotic biosynthesis; carminomycin biosynthesis. Functionally, involved in the biosynthesis of the anthracyclines carminomycin and daunorubicin (daunomycin) which are aromatic polyketide antibiotics that exhibit high cytotoxicity and are widely applied in the chemotherapy of a variety of cancers. Catalyzes the removal of methyl group from the carbomethoxy group of rhodomycin D (10-carbomethoxy-13-deoxycarminomycin) and 4-O-methylrhodomycin D to yield 10-carboxy-13-deoxycarminomycin and 10-carboxy-13-deoxydaunorubicin, respectively. Could be also involved in the decarboxylation of 10-carboxy-13-deoxycarminomycin and 10-carboxy-13-deoxydaunorubicin to yield 13-deoxycarminomycin and 13-deoxydaunorubicin, respectively. It seems that DnrK may influence the ability of DnrP to carry out the decarboxylation. This chain is Rhodomycin D methylesterase DnrP (dnrP), found in Streptomyces peucetius.